The following is a 647-amino-acid chain: Exoribonuclease 2 (647 aa).

In terms of domain architecture, RNB spans 190–519 (REDLTSLPFV…NHRLLKAIIK (330 aa)). One can recognise an S1 motif domain in the interval 564–646 (EQRFSAEVID…ETRSIVARPV (83 aa)).

The protein belongs to the RNR ribonuclease family. RNase II subfamily.

The protein localises to the cytoplasm. The catalysed reaction is Exonucleolytic cleavage in the 3'- to 5'-direction to yield nucleoside 5'-phosphates.. Functionally, involved in mRNA degradation. Hydrolyzes single-stranded polyribonucleotides processively in the 3' to 5' direction. This chain is Exoribonuclease 2, found in Erwinia tasmaniensis (strain DSM 17950 / CFBP 7177 / CIP 109463 / NCPPB 4357 / Et1/99).